Reading from the N-terminus, the 239-residue chain is Ribonuclease PH (239 aa).

Phosphate contacts are provided by residues Arg-86 and 124–126; that span reads GTR.

Belongs to the RNase PH family. Homohexameric ring arranged as a trimer of dimers.

The enzyme catalyses tRNA(n+1) + phosphate = tRNA(n) + a ribonucleoside 5'-diphosphate. In terms of biological role, phosphorolytic 3'-5' exoribonuclease that plays an important role in tRNA 3'-end maturation. Removes nucleotide residues following the 3'-CCA terminus of tRNAs; can also add nucleotides to the ends of RNA molecules by using nucleoside diphosphates as substrates, but this may not be physiologically important. Probably plays a role in initiation of 16S rRNA degradation (leading to ribosome degradation) during starvation. The polypeptide is Ribonuclease PH (Psychromonas ingrahamii (strain DSM 17664 / CCUG 51855 / 37)).